The chain runs to 252 residues: Secreted LysM effector LysM1 (252 aa).

One can recognise a LysM 1 domain in the interval Phe-20–Val-64. Positions Asp-71–Ala-98 are disordered. Residues Thr-72 to Ala-98 show a composition bias toward low complexity. LysM domains follow at residues Lys-126 to Val-172 and Lys-204 to Ile-250.

This sequence belongs to the secreted LysM effector family.

It localises to the secreted. The protein resides in the cell wall. In terms of biological role, secreted effector that binds two substrates, chitin and N-linked oligosaccharides associated with human skin glycoproteins. Could provide the pathogen with three important functions including shielding host cell wall chitin from the human immune system, shielding the pathogen's glycoproteins from host degradation and immune surveillance, and helping facilitate pathogen adhesion to human skin. The polypeptide is Secreted LysM effector LysM1 (Trichophyton rubrum (strain ATCC MYA-4607 / CBS 118892) (Athlete's foot fungus)).